The sequence spans 114 residues: Cholecystokinin (114 aa).

Residues 1-20 form the signal peptide; that stretch reads MNGGLCLCVLMAVLAAGTLA. Tyr96 carries the post-translational modification Sulfotyrosine. Phe102 is modified (phenylalanine amide). A propeptide spanning residues 106–114 is cleaved from the precursor; sequence SAEEYEYTS. Sulfotyrosine occurs at positions 110 and 112.

Belongs to the gastrin/cholecystokinin family. In terms of assembly, binds to CCK-A receptors in the pancreas and CCK-B receptors in the brain. Post-translationally, the precursor is cleaved by proteases to produce a number of active cholecystokinins. Brain contains CCK-octapeptide (CCK8) and several CCK-desoctapeptides; whereas pig gut contains intact CCK33, CCK39, and CCK58 as well as CCK-octapeptide and the CCK-desoctapeptides. Distribution differences are due to tissue-specific post-translational processing events. The precursor is cleaved by ACE, which removes the Gly-Arg-Arg peptide at the C-terminus, leading to mature hormone. As to expression, synthesized in both cerebral cortex and duodenal mucosa.

It is found in the secreted. Its function is as follows. This peptide hormone induces gall bladder contraction and the release of pancreatic enzymes in the gut. Its function in the brain is not clear. Binding to CCK-A receptors stimulates amylase release from the pancreas, binding to CCK-B receptors stimulates gastric acid secretion. The protein is Cholecystokinin (CCK) of Sus scrofa (Pig).